The following is a 290-amino-acid chain: Endonuclease 2 (290 aa).

The first 27 residues, 1–27 (MANQKGLHVVMMIITVWLLYAAPNIHG), serve as a signal peptide directing secretion. Positions 28 and 33 each coordinate a divalent metal cation. A substrate-binding site is contributed by 28 to 33 (WGKEGH). Cys-37 and Cys-68 form a disulfide bridge. 2 residues coordinate a divalent metal cation: Asp-72 and His-85. Substrate is bound by residues 72 to 76 (DRVKF), 85 to 88 (HYIN), and 94 to 99 (SYQYNR). Disulfide bonds link Cys-93–Cys-245, Cys-101–Cys-111, and Cys-226–Cys-232. 2 residues coordinate substrate: Asn-118 and Tyr-136. Asn-118 is a glycosylation site (N-linked (GlcNAc...) asparagine). The N-linked (GlcNAc...) asparagine glycan is linked to Asn-137. His-147, Asp-151, His-157, His-181, and Asp-185 together coordinate a divalent metal cation. Residues 147–196 (HFMGDIHQPLHVSYASDKGGNTIEVHWYTRKANLHHIWDSNIIETAEADL) are substrate binding. Asn-211 carries N-linked (GlcNAc...) asparagine glycosylation. Positions 283 to 290 (ATLNRIFG) are cleaved as a propeptide — removed in mature form.

Belongs to the nuclease type I family. Monomer. It depends on Mn(2+) as a cofactor. The cofactor is Ca(2+). Zn(2+) is required as a cofactor. N-glycosylation is required for enzymatic stability and activity.

It catalyses the reaction Endonucleolytic cleavage to 5'-phosphomononucleotide and 5'-phosphooligonucleotide end-products.. With respect to regulation, ssDNase activity is inhibited by the divalent cation chelator EDTA and the reducing agent DTT. Divalent metal ions (e.g. Ca(2+), Mg(2+) and Zn(2+)) and DTT represses RNase activity. RNase activity is enhanced by EDTA. Also repressed by vanadate (VO(4)(3-)) and phosphate (PO(4)(3-)) by occupying the active site. In terms of biological role, endonuclease mostly active on RNA and ssDNA, and to a lower extent, on dsDNA. Can cleave mismatch regions in heteroduplex DNA containing single base pair mismatches or insertion/deletion bases. In contradiction with PubMed:22506810, cannot hydrolyze single-stranded DNA and does not cleave mismatches. The polypeptide is Endonuclease 2 (Arabidopsis thaliana (Mouse-ear cress)).